A 732-amino-acid polypeptide reads, in one-letter code: Prolyl tripeptidyl peptidase (732 aa).

Positions 1–24 (MKKTIFQQLFLSVCALTVALPCSA) are cleaved as a signal peptide. Catalysis depends on charge relay system residues Ser-603, Asp-678, and His-710.

This sequence belongs to the peptidase S9B family.

The catalysed reaction is Hydrolysis of Xaa-Xaa-Pro-|-Yaa- releasing the N-terminal tripeptide of a peptide with Pro as the third residue (position P1) and where Yaa is not proline.. In terms of biological role, serine proteinase. Releases tripeptides from the free amino terminus of proteins. Has a requirement for Pro in the P1 position, but is inactivated by Pro in the P1' position. The polypeptide is Prolyl tripeptidyl peptidase (Porphyromonas gingivalis (strain ATCC 33277 / DSM 20709 / CIP 103683 / JCM 12257 / NCTC 11834 / 2561)).